A 1178-amino-acid chain; its full sequence is DNA-directed RNA polymerase subunit beta' (1178 aa).

Zn(2+)-binding residues include Cys60, Cys62, Cys75, and Cys78. Residues Asp450, Asp452, and Asp454 each coordinate Mg(2+). Zn(2+) is bound by residues Cys795, Cys869, Cys876, and Cys879.

It belongs to the RNA polymerase beta' chain family. As to quaternary structure, the RNAP catalytic core consists of 2 alpha, 1 beta, 1 beta' and 1 omega subunit. When a sigma factor is associated with the core the holoenzyme is formed, which can initiate transcription. The cofactor is Mg(2+). Zn(2+) is required as a cofactor.

The enzyme catalyses RNA(n) + a ribonucleoside 5'-triphosphate = RNA(n+1) + diphosphate. Its function is as follows. DNA-dependent RNA polymerase catalyzes the transcription of DNA into RNA using the four ribonucleoside triphosphates as substrates. The protein is DNA-directed RNA polymerase subunit beta' of Clostridium perfringens (strain ATCC 13124 / DSM 756 / JCM 1290 / NCIMB 6125 / NCTC 8237 / Type A).